The sequence spans 104 residues: L-rhamnose mutarotase (104 aa).

Y18 provides a ligand contact to substrate. The Proton donor role is filled by H22. Substrate is bound by residues Y41 and 76–77; that span reads WW.

Belongs to the rhamnose mutarotase family. Homodimer.

It localises to the cytoplasm. It catalyses the reaction alpha-L-rhamnose = beta-L-rhamnose. It participates in carbohydrate metabolism; L-rhamnose metabolism. Involved in the anomeric conversion of L-rhamnose. This is L-rhamnose mutarotase from Salmonella dublin (strain CT_02021853).